The chain runs to 288 residues: Heme oxygenase 1 (288 aa).

Residues methionine 1–alanine 265 are Cytoplasmic-facing. Heme b contacts are provided by lysine 18, histidine 25, tyrosine 134, and arginine 183. Positions histidine 223–asparagine 260 are disordered. Serine 229 bears the Phosphoserine mark. Residues proline 266 to methionine 288 traverse the membrane as a helical; Anchor for type IV membrane protein segment.

It belongs to the heme oxygenase family. As to quaternary structure, (Microbial infection) Interacts with SARS-CoV-2 ORF3A protein; the interaction promotes ORF3A-induced autophagy but is unlikely to be involved in ORF3A-mediated induction of reticulophagy. In terms of assembly, homodimer and higher order homooligomer. Oligomerization is crucial for its stability and function in the endoplasmic reticulum. Interacts with FLVCR2; this interaction is potentiated in the presence of heme. Post-translationally, a soluble form arises by proteolytic removal of the membrane anchor. In terms of tissue distribution, expressed at higher levels in renal cancer tissue than in normal tissue (at protein level).

The protein localises to the endoplasmic reticulum membrane. The catalysed reaction is heme b + 3 reduced [NADPH--hemoprotein reductase] + 3 O2 = biliverdin IXalpha + CO + Fe(2+) + 3 oxidized [NADPH--hemoprotein reductase] + 3 H2O + H(+). Its function is as follows. Catalyzes the oxidative cleavage of heme at the alpha-methene bridge carbon, released as carbon monoxide (CO), to generate biliverdin IXalpha, while releasing the central heme iron chelate as ferrous iron. Affords protection against programmed cell death and this cytoprotective effect relies on its ability to catabolize free heme and prevent it from sensitizing cells to undergo apoptosis. In terms of biological role, (Microbial infection) During SARS-COV-2 infection, promotes SARS-CoV-2 ORF3A-mediated autophagy but is unlikely to be required for ORF3A-mediated induction of reticulophagy. Functionally, catalyzes the oxidative cleavage of heme at the alpha-methene bridge carbon, released as carbon monoxide (CO), to generate biliverdin IXalpha, while releasing the central heme iron chelate as ferrous iron. This is Heme oxygenase 1 (HMOX1) from Homo sapiens (Human).